Consider the following 82-residue polypeptide: ATP synthase subunit c (82 aa).

Helical transmembrane passes span 7-27 and 53-73; these read LVAL…SIGI and FILA…ALLF.

Belongs to the ATPase C chain family. In terms of assembly, F-type ATPases have 2 components, F(1) - the catalytic core - and F(0) - the membrane proton channel. F(1) has five subunits: alpha(3), beta(3), gamma(1), delta(1), epsilon(1). F(0) has three main subunits: a(1), b(2) and c(10-14). The alpha and beta chains form an alternating ring which encloses part of the gamma chain. F(1) is attached to F(0) by a central stalk formed by the gamma and epsilon chains, while a peripheral stalk is formed by the delta and b chains.

It localises to the cell inner membrane. In terms of biological role, f(1)F(0) ATP synthase produces ATP from ADP in the presence of a proton or sodium gradient. F-type ATPases consist of two structural domains, F(1) containing the extramembraneous catalytic core and F(0) containing the membrane proton channel, linked together by a central stalk and a peripheral stalk. During catalysis, ATP synthesis in the catalytic domain of F(1) is coupled via a rotary mechanism of the central stalk subunits to proton translocation. Its function is as follows. Key component of the F(0) channel; it plays a direct role in translocation across the membrane. A homomeric c-ring of between 10-14 subunits forms the central stalk rotor element with the F(1) delta and epsilon subunits. This Acidovorax ebreus (strain TPSY) (Diaphorobacter sp. (strain TPSY)) protein is ATP synthase subunit c.